The following is a 443-amino-acid chain: MDKGAPPSIFVNDGSFMERFRQLQQEKDKDKDKVVQVEDSKPVKIISNPKPAANKISIGLKPNDAQKKGGKLAFSLKQKSKLLAPPVKLGTEEDEDDEDVKHEQGFGSVKRQKLEQRDTPVKSAKVSDVAPPPPSDPTVKKVADKLASFVAKHGRPFEHITRQKNPGDTPFKFLFDENCADYKYYVFRLAEEEKLISQTKDSGVLHSGDAGSRTSTAAIPLQKPAYQQTGYQIPASALYDTPVEPGASSRSAQASITRPSDSDSFSGPRGADPLSMMEFYMKKAAQEEKMRRPRQSKDEMPPPASLQGPSETSSTDPGKRGHHMGDYIPLEELDKFLSKCNDAAAQKATKEAAEKAKIQADNVGHKLLSKMGWKEGEGIGSSRKGMADPIMAGDVKTNNLGVGASAPGEVKPEDDIYEQYKKRMMLGYKHRPNPLGNPRKAYY.

Disordered regions lie at residues 45 to 71 (IISN…KGGK) and 83 to 141 (LAPP…TVKK). One copy of the SURP motif repeat lies at 142 to 185 (VADKLASFVAKHGRPFEHITRQKNPGDTPFKFLFDENCADYKYY). Disordered regions lie at residues 198–221 (QTKD…AIPL), 241–272 (TPVE…RGAD), and 285–325 (AQEE…HHMG). Polar residues predominate over residues 248-265 (SSRSAQASITRPSDSDSF). Basic and acidic residues predominate over residues 285 to 300 (AQEEKMRRPRQSKDEM). Residues 307 to 316 (QGPSETSSTD) are compositionally biased toward polar residues. The region spanning 360 to 407 (ADNVGHKLLSKMGWKEGEGIGSSRKGMADPIMAGDVKTNNLGVGASAP) is the G-patch domain.

Its subcellular location is the nucleus. This Arabidopsis thaliana (Mouse-ear cress) protein is SURP and G-patch domain-containing protein 1-like protein.